Consider the following 49-residue polypeptide: Soritesidine (49 aa).

It is found in the secreted. Its function is as follows. Very potent toxin that exhibits a wide range of toxicities over various organisms and cells including brine shrimp larvae (Artemia salina), sea hare eggs (Aplysia kurodai), mice, and cultured mammalian cells. An SOR-containing fraction cleaves plasmid DNA in a bivalent metal ion dependent manner suggesting genotoxicity of SOR. In Spongosorites sp. (strain QM G324170) (Okinawan marine Sponge), this protein is Soritesidine.